Consider the following 730-residue polypeptide: Patatin-like phospholipase domain-containing protein CIMG_04897 (730 aa).

The span at 1-11 (MTANSSRRRLQ) shows a compositional bias: basic residues. Positions 1 to 26 (MTANSSRRRLQMKSPRTDGDEKEEDY) are disordered. The chain crosses the membrane as a helical span at residues 97–117 (WPFLLFVLSWIVFLGALYILT). In terms of domain architecture, PNPLA spans 281–472 (LCLSGGATLA…RTDIPLKALD (192 aa)). Positions 312 to 316 (GTSGG) match the GXSXG motif. The active-site Nucleophile is the Ser-314. The active-site Proton acceptor is Asp-459. Residues 667-730 (GHFREAPTSH…QGQSSGTKIG (64 aa)) are disordered. A compositionally biased stretch (polar residues) spans 721–730 (QGQSSGTKIG).

It belongs to the PLPL family.

It is found in the membrane. Probable lipid hydrolase. The chain is Patatin-like phospholipase domain-containing protein CIMG_04897 from Coccidioides immitis (strain RS) (Valley fever fungus).